A 432-amino-acid polypeptide reads, in one-letter code: Probable anion transporter 5 (432 aa).

The N-terminal stretch at 1 to 23 is a signal peptide; it reads MKLSNIPQRYVIVFLTFLSTCVC. Transmembrane regions (helical) follow at residues 50 to 70, 78 to 98, 101 to 121, 140 to 160, 164 to 184, 229 to 249, 273 to 293, 305 to 325, 331 to 351, 360 to 380, and 405 to 425; these read TILS…GWAA, VLLL…LDPN, GLLV…FPSI, ITTS…PALV, GPES…LLWI, LPVW…YVLM, VPYL…DYLI, KFLN…LPMF, VILC…GFAV, YAGI…IIGV, and VVFF…LLFS.

The protein belongs to the major facilitator superfamily. Sodium/anion cotransporter (TC 2.A.1.14) family. In terms of tissue distribution, ubiquitous.

The protein localises to the golgi apparatus membrane. In terms of biological role, inorganic phosphate and probable anion transporter. This Arabidopsis thaliana (Mouse-ear cress) protein is Probable anion transporter 5 (ANTR5).